A 340-amino-acid polypeptide reads, in one-letter code: Holliday junction branch migration complex subunit RuvB (340 aa).

Residues 1-181 are large ATPase domain (RuvB-L); the sequence is MDRIVEIEKA…FGMQFRLNFY (181 aa). Residues Leu-20, Arg-21, Gly-62, Lys-65, Thr-66, Thr-67, 128-130, Arg-171, Tyr-181, and Arg-218 contribute to the ATP site; that span reads EDF. Thr-66 contributes to the Mg(2+) binding site. The segment at 182–252 is small ATPAse domain (RuvB-S); the sequence is TSDELAKIVQ…RAKSSLDALG (71 aa). The interval 255-340 is head domain (RuvB-H); sequence DLGFDEMDLK…TQKGLFDEDQ (86 aa). The DNA site is built by Arg-309 and Arg-314.

This sequence belongs to the RuvB family. In terms of assembly, homohexamer. Forms an RuvA(8)-RuvB(12)-Holliday junction (HJ) complex. HJ DNA is sandwiched between 2 RuvA tetramers; dsDNA enters through RuvA and exits via RuvB. An RuvB hexamer assembles on each DNA strand where it exits the tetramer. Each RuvB hexamer is contacted by two RuvA subunits (via domain III) on 2 adjacent RuvB subunits; this complex drives branch migration. In the full resolvosome a probable DNA-RuvA(4)-RuvB(12)-RuvC(2) complex forms which resolves the HJ.

Its subcellular location is the cytoplasm. It carries out the reaction ATP + H2O = ADP + phosphate + H(+). Functionally, the RuvA-RuvB-RuvC complex processes Holliday junction (HJ) DNA during genetic recombination and DNA repair, while the RuvA-RuvB complex plays an important role in the rescue of blocked DNA replication forks via replication fork reversal (RFR). RuvA specifically binds to HJ cruciform DNA, conferring on it an open structure. The RuvB hexamer acts as an ATP-dependent pump, pulling dsDNA into and through the RuvAB complex. RuvB forms 2 homohexamers on either side of HJ DNA bound by 1 or 2 RuvA tetramers; 4 subunits per hexamer contact DNA at a time. Coordinated motions by a converter formed by DNA-disengaged RuvB subunits stimulates ATP hydrolysis and nucleotide exchange. Immobilization of the converter enables RuvB to convert the ATP-contained energy into a lever motion, pulling 2 nucleotides of DNA out of the RuvA tetramer per ATP hydrolyzed, thus driving DNA branch migration. The RuvB motors rotate together with the DNA substrate, which together with the progressing nucleotide cycle form the mechanistic basis for DNA recombination by continuous HJ branch migration. Branch migration allows RuvC to scan DNA until it finds its consensus sequence, where it cleaves and resolves cruciform DNA. This Campylobacter hominis (strain ATCC BAA-381 / DSM 21671 / CCUG 45161 / LMG 19568 / NCTC 13146 / CH001A) protein is Holliday junction branch migration complex subunit RuvB.